The following is a 192-amino-acid chain: Putative inactive ribonuclease 11 (192 aa).

Residues 1-15 form the signal peptide; the sequence is MAVFLLLLALGLLLA. The interval 21-54 is disordered; that stretch reads RMKGTTEQFSQEEMQPAAKQTLEESANSTLSDKN. The span at 43–54 shows a compositional bias: polar residues; sequence EESANSTLSDKN. 2 N-linked (GlcNAc...) asparagine glycosylation sites follow: asparagine 47 and asparagine 104.

The protein belongs to the pancreatic ribonuclease family.

Its subcellular location is the secreted. The sequence is that of Putative inactive ribonuclease 11 (Rnase11) from Mus musculus (Mouse).